The following is a 367-amino-acid chain: Anhydro-N-acetylmuramic acid kinase (367 aa).

Position 13 to 20 (13 to 20) interacts with ATP; it reads GTSMDGAD.

This sequence belongs to the anhydro-N-acetylmuramic acid kinase family.

The enzyme catalyses 1,6-anhydro-N-acetyl-beta-muramate + ATP + H2O = N-acetyl-D-muramate 6-phosphate + ADP + H(+). It functions in the pathway amino-sugar metabolism; 1,6-anhydro-N-acetylmuramate degradation. It participates in cell wall biogenesis; peptidoglycan recycling. Functionally, catalyzes the specific phosphorylation of 1,6-anhydro-N-acetylmuramic acid (anhMurNAc) with the simultaneous cleavage of the 1,6-anhydro ring, generating MurNAc-6-P. Is required for the utilization of anhMurNAc either imported from the medium or derived from its own cell wall murein, and thus plays a role in cell wall recycling. The chain is Anhydro-N-acetylmuramic acid kinase from Neisseria meningitidis serogroup A / serotype 4A (strain DSM 15465 / Z2491).